Consider the following 72-residue polypeptide: 3-deoxy-manno-octulosonate cytidylyltransferase (72 aa).

The protein belongs to the KdsB family. Homodimer.

It localises to the cytoplasm. It carries out the reaction 3-deoxy-alpha-D-manno-oct-2-ulosonate + CTP = CMP-3-deoxy-beta-D-manno-octulosonate + diphosphate. Its pathway is nucleotide-sugar biosynthesis; CMP-3-deoxy-D-manno-octulosonate biosynthesis; CMP-3-deoxy-D-manno-octulosonate from 3-deoxy-D-manno-octulosonate and CTP: step 1/1. The protein operates within bacterial outer membrane biogenesis; lipopolysaccharide biosynthesis. In terms of biological role, activates KDO (a required 8-carbon sugar) for incorporation into bacterial lipopolysaccharide in Gram-negative bacteria. This chain is 3-deoxy-manno-octulosonate cytidylyltransferase (kpsU), found in Escherichia coli.